The sequence spans 278 residues: Orotidine 5'-phosphate decarboxylase (278 aa).

Lys95 (proton donor) is an active-site residue.

It belongs to the OMP decarboxylase family. Type 2 subfamily.

The enzyme catalyses orotidine 5'-phosphate + H(+) = UMP + CO2. The protein operates within pyrimidine metabolism; UMP biosynthesis via de novo pathway; UMP from orotate: step 2/2. This chain is Orotidine 5'-phosphate decarboxylase, found in Corynebacterium glutamicum (strain ATCC 13032 / DSM 20300 / JCM 1318 / BCRC 11384 / CCUG 27702 / LMG 3730 / NBRC 12168 / NCIMB 10025 / NRRL B-2784 / 534).